The following is a 557-amino-acid chain: Potassium-transporting ATPase potassium-binding subunit (557 aa).

The next 12 membrane-spanning stretches (helical) occupy residues 5 to 25, 63 to 83, 132 to 152, 170 to 190, 253 to 273, 283 to 303, 329 to 349, 356 to 376, 379 to 399, 416 to 436, 484 to 504, and 526 to 546; these read GFLLIVTFLLVLMVLARPLGS, LSAILGLNMLGLAVLFFMLLG, GLTVQNFLSAASGIAVIFALI, LLRITLWVLAPVALLIALFFI, FVQMLAIFVIPTALCFAFGEV, LLWAMSVIFVICVGVVMWAEV, VLVSSLFAVVTTAASCGAVIA, ALGGMVPMWLMQIGEVVFGGV, GLYGMMLFVLLAVFIAGLMIG, LTALAILVTPTLVLMGAALAM, LLAFCMFVGRFGVIIPVMAIA, and LFVGLLIGTVLLVGALTFIPA.

This sequence belongs to the KdpA family. In terms of assembly, the system is composed of three essential subunits: KdpA, KdpB and KdpC.

It is found in the cell inner membrane. Its function is as follows. Part of the high-affinity ATP-driven potassium transport (or Kdp) system, which catalyzes the hydrolysis of ATP coupled with the electrogenic transport of potassium into the cytoplasm. This subunit binds the periplasmic potassium ions and delivers the ions to the membrane domain of KdpB through an intramembrane tunnel. This Escherichia fergusonii (strain ATCC 35469 / DSM 13698 / CCUG 18766 / IAM 14443 / JCM 21226 / LMG 7866 / NBRC 102419 / NCTC 12128 / CDC 0568-73) protein is Potassium-transporting ATPase potassium-binding subunit.